The primary structure comprises 356 residues: DNA polymerase IV (356 aa).

The 182-residue stretch at Ile6–Gly187 folds into the UmuC domain. Mg(2+) contacts are provided by Asp10 and Asp105. Glu106 is an active-site residue.

The protein belongs to the DNA polymerase type-Y family. Monomer. The cofactor is Mg(2+).

The protein localises to the cytoplasm. The enzyme catalyses DNA(n) + a 2'-deoxyribonucleoside 5'-triphosphate = DNA(n+1) + diphosphate. Poorly processive, error-prone DNA polymerase involved in untargeted mutagenesis. Copies undamaged DNA at stalled replication forks, which arise in vivo from mismatched or misaligned primer ends. These misaligned primers can be extended by PolIV. Exhibits no 3'-5' exonuclease (proofreading) activity. May be involved in translesional synthesis, in conjunction with the beta clamp from PolIII. This Staphylococcus aureus (strain MRSA252) protein is DNA polymerase IV.